We begin with the raw amino-acid sequence, 352 residues long: Thiosulfate transporter TsuA (352 aa).

A helical transmembrane segment spans residues 1–21 (MFSMILSGLICGALLGFVMQR). At 22–44 (GRFCLTGGFRDMYIVKNNRMFYA) the chain is on the cytoplasmic side. A helical membrane pass occupies residues 45-65 (LLIAISVQSVGVFALIQAGLL). Residues 66–70 (TYEAG) lie on the Periplasmic side of the membrane. Residues 71-91 (AFPWLGTVIGGYIFGLGIVLA) traverse the membrane as a helical segment. The Cytoplasmic segment spans residues 92-102 (GGCATGTWYRA). Residues 103 to 123 (GEGLIGSWIALFTYMVMSAVM) form a helical membrane-spanning segment. The Periplasmic segment spans residues 124–148 (RSPHASGLNQTLQHYSTEHNSIAET). A helical transmembrane segment spans residues 149–169 (FNLSVWPLVAVLLVITLWVVM). Residues 170–197 (KELKKPKLKVATLPPRRTGIAHILFEKR) are Cytoplasmic-facing. The helical transmembrane segment at 198–218 (WHPFVTAVLIGLIALLAWPLS) threads the bilayer. Residues 219–247 (EATGRMFGLGITSPTANILQFLVAGDMKY) lie on the Periplasmic side of the membrane. The chain crosses the membrane as a helical span at residues 248–268 (INWGVFLVLGIFVGSFIAAKA). Residues 269-289 (SREFRVRAADAQTTLRSGLGG) lie on the Cytoplasmic side of the membrane. A helical transmembrane segment spans residues 290–310 (VLMGFGASIAGGCSIGNGLVM). Over 311-317 (TAMMTWQ) the chain is Periplasmic. A helical membrane pass occupies residues 318-338 (GWIGLVFMILGVWTASWLVYV). At 339–352 (RPQRKARLATAAAN) the chain is on the cytoplasmic side.

The protein belongs to the TsuA/YedE (TC 9.B.102) family.

It is found in the cell inner membrane. It carries out the reaction thiosulfate(in) = thiosulfate(out). In terms of biological role, mediates thiosulfate uptake. In Escherichia coli (strain K12), this protein is Thiosulfate transporter TsuA.